The primary structure comprises 481 residues: MDGAVMEGPLFLQSQRFGTKRWRKTWAVLYPASPHGVARLEFFDHKGSSSGGGRGSSRRLDCKVIRLAECVSVAPVTVETPPEPGATAFRLDTAQRSHLLAADAPSSAAWVQTLCRNAFPKGSWTLAPTDNPPKLSALEMLENSLYSPTWEGSQFWVTVQRTEAAERCGLHGSYVLRVEAERLTLLTVGAQSQILEPLLSWPYTLLRRYGRDKVMFSFEAGRRCPSGPGTFTFQTAQGNDIFQAVETAIHRQKAQGKAGQGHDVLRADSHEGEVAEGKLPSPPGPQELLDSPPALYAEPLDSLRIAPCPSQDSLYSDPLDSTSAQAGEGVQRKKPLYWDLYEHAQQQLLKAKLTDPKEDPIYDEPEGLAPVPPQGLYDLPREPKDAWWCQARVKEEGYELPYNPATDDYAVPPPRSTKPLLAPKPQGPAFPEPGTATGSGIKSHNSALYSQVQKSGASGSWDCGLSRVGTDKTGVKSEGST.

Position 1 is an N-acetylmethionine (Met-1). Positions 4–119 constitute a PH domain; the sequence is AVMEGPLFLQ…WVQTLCRNAF (116 aa). At Ser-48 the chain carries Phosphoserine. One can recognise an IRS-type PTB domain in the interval 151–259; that stretch reads EGSQFWVTVQ…HRQKAQGKAG (109 aa). Phosphoserine occurs at positions 269 and 291. Positions 270-293 are disordered; the sequence is HEGEVAEGKLPSPPGPQELLDSPP. The residue at position 296 (Tyr-296) is a Phosphotyrosine. The interval 307–329 is disordered; sequence PCPSQDSLYSDPLDSTSAQAGEG. Residues 310–325 show a composition bias toward polar residues; that stretch reads SQDSLYSDPLDSTSAQ. A phosphotyrosine mark is found at Tyr-337 and Tyr-341. At Tyr-362 the chain carries Phosphotyrosine; by INSR. At Tyr-377 the chain carries Phosphotyrosine. The residue at position 398 (Tyr-398) is a Phosphotyrosine; by INSR. A disordered region spans residues 404–481; sequence PATDDYAVPP…KTGVKSEGST (78 aa). Position 409 is a phosphotyrosine (Tyr-409). Ser-416 bears the Phosphoserine mark. Polar residues predominate over residues 436–458; sequence ATGSGIKSHNSALYSQVQKSGAS. Tyr-449 is subject to Phosphotyrosine. Ser-460 is subject to Phosphoserine.

The protein belongs to the DOK family. Type A subfamily. As to quaternary structure, interacts with ABL1. Interacts with RasGAP and INPP5D/SHIP1. Interacts directly with phosphorylated ITGB3. Interacts with SRMS (via the SH2 and SH3 domains). In terms of processing, constitutively tyrosine-phosphorylated. Phosphorylated by TEC. Phosphorylated by LYN. Phosphorylated on tyrosine residues by the insulin receptor kinase. Results in the negative regulation of the insulin signaling pathway. Phosphorylated on tyrosine residues by SRMS. Expressed in pancreas, heart, leukocyte and spleen. Expressed in both resting and activated peripheral blood T-cells. Expressed in breast cancer.

It localises to the cytoplasm. It is found in the nucleus. The protein resides in the perinuclear region. In terms of biological role, DOK proteins are enzymatically inert adaptor or scaffolding proteins. They provide a docking platform for the assembly of multimolecular signaling complexes. DOK1 appears to be a negative regulator of the insulin signaling pathway. Modulates integrin activation by competing with talin for the same binding site on ITGB3. The protein is Docking protein 1 (DOK1) of Homo sapiens (Human).